A 383-amino-acid chain; its full sequence is Chitinase-3-like protein 1 (383 aa).

The first 21 residues, 1 to 21 (MGLRVAQTGFVVLVLLQSCAA), serve as a signal peptide directing secretion. The GH18 domain occupies 22-383 (YKLICYYTSW…NAIKDVLAGV (362 aa)). Cys26 and Cys51 are disulfide-bonded. The N-linked (GlcNAc...) asparagine glycan is linked to Asn60. Residues 70-71 (EW), 97-100 (GGWN), Tyr141, 204-207 (LTYD), and Lys263 contribute to the chitin site. Cys300 and Cys364 are disulfide-bonded. The interval 324–338 (QWVAYDDQESVKNKA) is important for AKT1 activation and IL8 production. Trp352 serves as a coordination point for chitin.

Belongs to the glycosyl hydrolase 18 family. In terms of assembly, monomer. In terms of tissue distribution, detected in mammary gland.

It localises to the secreted. It is found in the extracellular space. Its subcellular location is the cytoplasm. The protein resides in the perinuclear region. The protein localises to the endoplasmic reticulum. Its function is as follows. Carbohydrate-binding lectin with a preference for chitin. Has no chitinase activity. May play a role in tissue remodeling and in the capacity of cells to respond to and cope with changes in their environment. Plays a role in T-helper cell type 2 (Th2) inflammatory response and IL-13-induced inflammation, regulating allergen sensitization, inflammatory cell apoptosis, dendritic cell accumulation and M2 macrophage differentiation. Facilitates invasion of pathogenic enteric bacteria into colonic mucosa and lymphoid organs. Mediates activation of AKT1 signaling pathway and subsequent IL8 production in colonic epithelial cells. Regulates antibacterial responses in lung by contributing to macrophage bacterial killing, controlling bacterial dissemination and augmenting host tolerance. Also regulates hyperoxia-induced injury, inflammation and epithelial apoptosis in lung. The sequence is that of Chitinase-3-like protein 1 (CHI3L1) from Bubalus bubalis (Domestic water buffalo).